The following is a 532-amino-acid chain: 2,3-bisphosphoglycerate-independent phosphoglycerate mutase (532 aa).

Asp-15 and Ser-65 together coordinate Mn(2+). Catalysis depends on Ser-65, which acts as the Phosphoserine intermediate. Substrate is bound by residues His-126, 156 to 157, Arg-188, Arg-194, 258 to 261, and Lys-331; these read RD and RPDR. Asp-398, His-402, Asp-439, His-440, and His-457 together coordinate Mn(2+).

This sequence belongs to the BPG-independent phosphoglycerate mutase family. As to quaternary structure, monomer. Requires Mn(2+) as cofactor.

It catalyses the reaction (2R)-2-phosphoglycerate = (2R)-3-phosphoglycerate. The protein operates within carbohydrate degradation; glycolysis; pyruvate from D-glyceraldehyde 3-phosphate: step 3/5. Functionally, catalyzes the interconversion of 2-phosphoglycerate and 3-phosphoglycerate. This Synechococcus elongatus (strain ATCC 33912 / PCC 7942 / FACHB-805) (Anacystis nidulans R2) protein is 2,3-bisphosphoglycerate-independent phosphoglycerate mutase.